Consider the following 517-residue polypeptide: Cytochrome P450 CYP72A616 (517 aa).

Residues 5–25 (VLGALAALLAAAAAWVMRAAA) form a helical membrane-spanning segment. Cys465 contributes to the heme binding site.

It belongs to the cytochrome P450 family. In terms of tissue distribution, mainly expressed in leaves and, at low levels, in roots, fruits and stems.

The protein resides in the membrane. It functions in the pathway steroid metabolism; cholesterol metabolism. Its function is as follows. Involved in the biosynthesis of spiroketal steroid and saponin natural products from cholesterol such as diosgenin and analogs (e.g. furostanol and spirostanol), plant defense compounds used as main precursors for the industrial production of steroid hormones. During the 5,6-spiroketalization of cholesterol, may catalyze the 27-monohydroxylation of furostanol-type steroid to an intermediate product that undergoes a stereospecific formation of the terminal heterocycle to yield diosgenin. The chain is Cytochrome P450 CYP72A616 from Paris polyphylla (Daiswa polyphylla).